The sequence spans 201 residues: Probable GTP-binding protein EngB (201 aa).

Positions 22 to 197 (TFPEYAFIGR…LNYIESINKE (176 aa)) constitute an EngB-type G domain. Residues 30-37 (GRSNVGKS), 57-61 (GKTML), 75-78 (DLPG), 142-145 (TKAD), and 175-178 (ITSS) contribute to the GTP site. S37 and T59 together coordinate Mg(2+).

The protein belongs to the TRAFAC class TrmE-Era-EngA-EngB-Septin-like GTPase superfamily. EngB GTPase family. The cofactor is Mg(2+).

Necessary for normal cell division and for the maintenance of normal septation. The sequence is that of Probable GTP-binding protein EngB from Bacteroides fragilis (strain ATCC 25285 / DSM 2151 / CCUG 4856 / JCM 11019 / LMG 10263 / NCTC 9343 / Onslow / VPI 2553 / EN-2).